Reading from the N-terminus, the 264-residue chain is Small ribosomal subunit protein eS1 (264 aa).

At Lys-34 the chain carries N6-acetyllysine; alternate. Residue Lys-34 forms a Glycyl lysine isopeptide (Lys-Gly) (interchain with G-Cter in SUMO2); alternate linkage. An N6-acetyllysine modification is found at Lys-56. Tyr-155 carries the ADP-ribosyltyrosine modification. The tract at residues 233–264 is disordered; it reads GEGGSSGKAAGDETGAKVERADGYEPPVQESV. Ser-237 is modified (phosphoserine). The segment covering 242–255 has biased composition (basic and acidic residues); the sequence is AGDETGAKVERADG. Lys-249 carries the N6-acetyllysine; alternate modification. Lys-249 is covalently cross-linked (Glycyl lysine isopeptide (Lys-Gly) (interchain with G-Cter in SUMO2); alternate). The residue at position 256 (Tyr-256) is a Phosphotyrosine. Ser-263 is subject to Phosphoserine.

It belongs to the eukaryotic ribosomal protein eS1 family. In terms of assembly, component of the small ribosomal subunit. Mature ribosomes consist of a small (40S) and a large (60S) subunit. The 40S subunit contains about 33 different proteins and 1 molecule of RNA (18S). The 60S subunit contains about 49 different proteins and 3 molecules of RNA (28S, 5.8S and 5S). Identified in a IGF2BP1-dependent mRNP granule complex containing untranslated mRNAs. Binds with high affinity to IPO4. Interacts with DDIT3. Part of the small subunit (SSU) processome, composed of more than 70 proteins and the RNA chaperone small nucleolar RNA (snoRNA) U3. Post-translationally, ADP-ribosylated at Tyr-155 by PARP1 in presence of HPF1.

The protein localises to the cytoplasm. It is found in the nucleus. It localises to the nucleolus. Its function is as follows. Component of the small ribosomal subunit. The ribosome is a large ribonucleoprotein complex responsible for the synthesis of proteins in the cell. Part of the small subunit (SSU) processome, first precursor of the small eukaryotic ribosomal subunit. During the assembly of the SSU processome in the nucleolus, many ribosome biogenesis factors, an RNA chaperone and ribosomal proteins associate with the nascent pre-rRNA and work in concert to generate RNA folding, modifications, rearrangements and cleavage as well as targeted degradation of pre-ribosomal RNA by the RNA exosome. May play a role during erythropoiesis through regulation of transcription factor DDIT3. The chain is Small ribosomal subunit protein eS1 (Rps3a) from Mus musculus (Mouse).